A 568-amino-acid polypeptide reads, in one-letter code: SLAIN motif-containing protein 1 (568 aa).

Disordered stretches follow at residues 1–22 (MMAE…SGPV), 59–92 (LLLL…TAAA), 139–162 (GGGP…SPPP), 235–256 (YTSR…STSE), and 291–403 (STSA…LRRS). Residues 21-56 (PVVNAELEVKKLQELVRKLEKQNEQLRSRAASAAAA) adopt a coiled-coil conformation. Residues 62–74 (LPPPPPAAPPPAG) show a composition bias toward pro residues. The segment covering 75 to 92 (LQPLGPRSPPAATATAAA) has biased composition (low complexity). The span at 139–149 (GGGPEPGGAGT) shows a compositional bias: gly residues. A compositionally biased stretch (polar residues) spans 235-245 (YTSRGSPLSPQ). The residue at position 243 (serine 243) is a Phosphoserine. Composition is skewed to low complexity over residues 246–255 (SSIDSELSTS) and 291–307 (STSA…SLSS). A compositionally biased stretch (acidic residues) spans 316–329 (QEYDQYSLEDEEEF). Over residues 366-384 (SSQYFPSNNYQQQQYYSPQ) the composition is skewed to low complexity. Residues 385–395 (AQTPDQQPNRT) show a composition bias toward polar residues. Arginine 471 and arginine 543 each carry asymmetric dimethylarginine.

The protein belongs to the SLAIN motif-containing family. Interacts with MAPRE1, MAPRE2, MAPRE3 and CKAP5. Interacts with ZDHHC17 (via ANK repeats). Expressed in embryonic stem cells. Expressed in brain.

Its subcellular location is the cytoplasm. The protein localises to the cytoskeleton. Functionally, microtubule plus-end tracking protein that might be involved in the regulation of cytoplasmic microtubule dynamics, microtubule organization and microtubule elongation. The chain is SLAIN motif-containing protein 1 (SLAIN1) from Homo sapiens (Human).